The chain runs to 348 residues: NADH-quinone oxidoreductase subunit H (348 aa).

Helical transmembrane passes span 25–45 (ILFLVGQALVIFLVVVIVAAL), 95–115 (FMFILAPAVAMFTALASFAII), 128–148 (IGILFFFAMAGMAVYAVMFGG), 168–188 (ISYEVFLGLSLMGVVAMTGSF), 204–224 (WNIFPQFLGFLTFVVAGVAVT), 254–274 (FFIGEYVNVVLISALMTCLFF), 287–307 (ILPPAFWFMIKTLFFMTMFVL), and 327–347 (VCLPVTLINLMITAALILISA).

It belongs to the complex I subunit 1 family. In terms of assembly, NDH-1 is composed of 14 different subunits. Subunits NuoA, H, J, K, L, M, N constitute the membrane sector of the complex.

It localises to the cell inner membrane. It catalyses the reaction a quinone + NADH + 5 H(+)(in) = a quinol + NAD(+) + 4 H(+)(out). NDH-1 shuttles electrons from NADH, via FMN and iron-sulfur (Fe-S) centers, to quinones in the respiratory chain. The immediate electron acceptor for the enzyme in this species is believed to be ubiquinone. Couples the redox reaction to proton translocation (for every two electrons transferred, four hydrogen ions are translocated across the cytoplasmic membrane), and thus conserves the redox energy in a proton gradient. This subunit may bind ubiquinone. The protein is NADH-quinone oxidoreductase subunit H of Psychrobacter sp. (strain PRwf-1).